The sequence spans 427 residues: Serine/threonine-protein kinase ssn3 (427 aa).

Residues 40–369 (YHIVGFISSG…AQEALEHPYF (330 aa)) form the Protein kinase domain. Residues 46–54 (ISSGTYGRV) and Lys-70 contribute to the ATP site. Asp-172 (proton acceptor) is an active-site residue. The span at 390–399 (RRVTQDDNDI) shows a compositional bias: basic and acidic residues. Residues 390–427 (RRVTQDDNDIRSGSLPGTKRSGLPDDSLLGRATKRLKE) form a disordered region.

Belongs to the protein kinase superfamily. CMGC Ser/Thr protein kinase family. CDC2/CDKX subfamily. In terms of assembly, component of the srb8-11 complex, a regulatory module of the Mediator complex. The cofactor is Mg(2+).

The protein resides in the nucleus. It catalyses the reaction L-seryl-[protein] + ATP = O-phospho-L-seryl-[protein] + ADP + H(+). The catalysed reaction is L-threonyl-[protein] + ATP = O-phospho-L-threonyl-[protein] + ADP + H(+). The enzyme catalyses [DNA-directed RNA polymerase] + ATP = phospho-[DNA-directed RNA polymerase] + ADP + H(+). In terms of biological role, component of the srb8-11 complex. The srb8-11 complex is a regulatory module of the Mediator complex which is itself involved in regulation of basal and activated RNA polymerase II-dependent transcription. The srb8-11 complex may be involved in the transcriptional repression of a subset of genes regulated by Mediator. It may inhibit the association of the Mediator complex with RNA polymerase II to form the holoenzyme complex. The srb8-11 complex phosphorylates the C-terminal domain (CTD) of the largest subunit of RNA polymerase II. The polypeptide is Serine/threonine-protein kinase ssn3 (ssn3) (Aspergillus niger (strain ATCC MYA-4892 / CBS 513.88 / FGSC A1513)).